Reading from the N-terminus, the 243-residue chain is 35 kDa gas vesicle protein (243 aa).

This sequence belongs to the gas vesicle GvpC family.

Its subcellular location is the gas vesicle shell. May confer stability to the gas vesicle shells. Gas vesicles are small, hollow, gas filled protein structures that are found in several microbial planktonic microorganisms. They allow the positioning of the organism at the favorable depth for growth. The chain is 35 kDa gas vesicle protein from Dactylococcopsis salina (strain PCC 8305) (Myxobactron salinum).